Reading from the N-terminus, the 258-residue chain is Coiled-coil domain-containing protein 107 (258 aa).

Positions 1–24 are cleaved as a signal peptide; sequence MASVVSLAGTLGLLLVSALPEVLG. Positions 25-35 are enriched in basic and acidic residues; the sequence is DRRSPDRRAHP. The tract at residues 25 to 63 is disordered; sequence DRRSPDRRAHPGDAGQVGPAAAEPRRQSPPSKNQRERAR. The chain crosses the membrane as a helical span at residues 66–86; it reads ALPLGALYTAAAVAFVLYKCL. A coiled-coil region spans residues 106–134; that stretch reads LQSEQHLAQLTQQLVQTEQHLNSLMAQLD. The segment at 203–222 is disordered; the sequence is EPLNWNTGTRNLTPPREMQP.

It is found in the membrane. This chain is Coiled-coil domain-containing protein 107 (CCDC107), found in Bos taurus (Bovine).